The chain runs to 472 residues: Protein c-ets-2-A (472 aa).

The region spanning 85 to 170 (NTFNGFAKKR…EHLEEMMKEH (86 aa)) is the PNT domain. Residues 366–446 (IQLWQFLLEL…SGKRYVYRFV (81 aa)) constitute a DNA-binding region (ETS).

It belongs to the ETS family.

It localises to the nucleus. Functionally, probable transcription factor. The sequence is that of Protein c-ets-2-A (ets2-a) from Xenopus laevis (African clawed frog).